A 191-amino-acid chain; its full sequence is Ribonuclease HII (191 aa).

Residues 7–191 form the RNase H type-2 domain; that stretch reads ILMAGVDEVG…YSPVADLISK (185 aa). Residues Asp-13, Glu-14, and Asp-103 each coordinate a divalent metal cation.

Belongs to the RNase HII family. Requires Mn(2+) as cofactor. Mg(2+) is required as a cofactor.

It localises to the cytoplasm. It catalyses the reaction Endonucleolytic cleavage to 5'-phosphomonoester.. Its function is as follows. Endonuclease that specifically degrades the RNA of RNA-DNA hybrids. This Legionella pneumophila (strain Corby) protein is Ribonuclease HII.